We begin with the raw amino-acid sequence, 246 residues long: Short chain dehydrogenase/reductase dmxR12 (246 aa).

Positions 15, 34, 125, and 164 each coordinate NADP(+). Residue Lys164 is the Lowers pKa of active site Tyr of the active site.

It belongs to the short-chain dehydrogenases/reductases (SDR) family.

It functions in the pathway secondary metabolite biosynthesis. Its function is as follows. Short chain dehydrogenase/reductase; part of the gene cluster that mediates the biosynthesis of the dimeric xanthones cryptosporioptides. The pathway begins with the synthesis of atrochrysone thioester by the polyketide synthase dmx-nrPKS. The atrochrysone carboxyl ACP thioesterase dmxR1 then breaks the thioester bond and releases the atrochrysone carboxylic acid from dmx-nrPKS. Atrochrysone carboxylic acid is decarboxylated by the decarboxylase dmxR15, and oxidized by the anthrone oxygenase dmxR16 to yield emodin. Emodin is then reduced to emodin hydroquinone by the oxidoreductase dmxR7. A-ring reduction by the short chain dehydrogenase dmxR18, dehydration by the scytalone dehydratase-like protein dmxR17 and probable spontaneous re-oxidation, results in overall deoxygenation to chrysophanol. Baeyer-Villiger oxidation by the Baeyer-Villiger monooxygenase (BVMO) dmxR6 then yields monodictylactone in equilibrium with monodictyphenone. In the case of the cryptosporioptides biosynthesis, monodictylactone is reduced at C-12 to an alcohol (by the short chain dehydrogenases dmxR12 or dmxR8) and hydroxylated at C-5 by dmxR9, yielding the electron-rich aromatic which could eliminate H(2)O to form the ortho-quinonemethide, followed by tautomerisation to paraquinone and complete the formal reduction to produce the 10-methylgroup. Conjugate addition of C-4a-OH to the resulting paraquinone by the monooxygenase dmxR10 then gives cyclohexadienone, which is then reduced at C-5 by the short chain dehydrogenase dmxR3 to give the dihydroxanthone. The 6,7-epoxide in the cryptosporioptides could be introduced by the cytochrome P450 monooxygenase dmxL3. The highly reducing PKS dmxL2 manufactures butyrate, which is further carboxylated by dmxL1 to form ethylmalonate. It is not yet clear whether the carboxylation occurs while the butyrate is attached to the ACP of dmxL2, but this unusual fungal metabolite could then be esterified to O-5 by the O-acetyltransferase dmxR13. Finally, dimerization performed by dmxR5 gives the observed dimers cryptosporioptides A, B and C as the final products of the pathway. The polypeptide is Short chain dehydrogenase/reductase dmxR12 (Cryptosporiopsis sp. (strain 8999)).